The primary structure comprises 1047 residues: Ras GTPase-activating protein 1 (1047 aa).

Methionine 1 carries the N-acetylmethionine modification. The SH2 1 domain maps to 181–272 (WYHGKLDRTI…LKGEKLLYPV (92 aa)). An SH3 domain is found at 279–341 (EDRRRVRAIL…VEDLVEEVGR (63 aa)). One can recognise an SH2 2 domain in the interval 351–441 (WFHGKISKQE…VEGYYLKEPV (91 aa)). Positions 474–577 (NIVKKGYLLK…WMKGLQAFCN (104 aa)) constitute a PH domain. The C2 domain maps to 577-690 (NLRKSSPGTS…QKGHATDEWF (114 aa)). Tyrosine 615 carries the post-translational modification Phosphotyrosine. Residues 764-974 (KLESLLLCTL…HRMIMFLDEL (211 aa)) enclose the Ras-GAP domain. Serine 831 is modified (phosphoserine).

As to quaternary structure, interacts with SQSTM1. Interacts with SPSB1; the interaction does not promote degradation. Interacts with CAV2 (tyrosine phosphorylated form). Directly interacts with NCK1. Interacts with PDGFRB (tyrosine phosphorylated). Interacts (via SH2 domain) with the 'Tyr-9' phosphorylated form of PDPK1. Interacts with tyrosine-phosphorylated EPHB4. Post-translationally, the N-terminus is blocked. In terms of processing, phosphorylated by SRC and LCK. The phosphorylation SRC inhibits its ability to stimulate the Ras-GTPase activity, whereas phosphorylation by LCK does not display any effect on stimulation activity. As to expression, in placental villi, detected only in the trophoblast layer (cytotrophoblast and syncytiotrophoblast). Not detected in stromal, endothelial or Hofbauer cells (at protein level).

It is found in the cytoplasm. Its function is as follows. Inhibitory regulator of the Ras-cyclic AMP pathway. Stimulates the GTPase of normal but not oncogenic Ras p21; this stimulation may be further increased in the presence of NCK1. The chain is Ras GTPase-activating protein 1 (RASA1) from Homo sapiens (Human).